The following is a 210-amino-acid chain: CLAVATA3/ESR (CLE)-related protein 4A-3 (210 aa).

An N-terminal signal peptide occupies residues 1 to 21 (MAKNAMLCLLILRVVLALAFA). The segment at 21 to 83 (ATNKKGDEEP…SNQLPNNNWM (63 aa)) is required for secretion from the host cytoplasm to the host apoplasm. An N-linked (GlcNAc...) asparagine glycan is attached at Asn32. Residues 116 to 210 (RKTGMHSQRH…APAGPDPIHH (95 aa)) form a disordered region. Basic and acidic residues-rich tracts occupy residues 125–137 (HHEE…EKRV) and 144–200 (PIHH…EKRG). The A-1 repeat unit spans residues 127-135 (EETTLEQEK). The segment at 127-198 (EETTLEQEKR…HEDTTLEQEK (72 aa)) is 4 X approximate repeat A. The CLE-1 repeat unit spans residues 136–147 (RVAGAGPDPIHH). A 4 X approximate repeat CLE region spans residues 136-210 (RVAGAGPDPI…APAGPDPIHH (75 aa)). The stretch at 148–156 (QDTTLEQEK) is one A-2 repeat. One copy of the CLE-2 repeat lies at 157 to 168 (RAVPAGPDPKHH). The stretch at 169-177 (EETTLEQEK) is one A-3 repeat. The stretch at 178–189 (RAVPAGPDPKHH) is one CLE-3 repeat. One copy of the A-4 repeat lies at 190–198 (EDTTLEQEK). The CLE-4 repeat unit spans residues 199–210 (RGAPAGPDPIHH).

This sequence belongs to the CLV3/ESR signal peptide family. In terms of tissue distribution, highly expressed exclusively within the dorsal esophageal gland cell during syncytium formation in host plants.

The protein resides in the secreted. It is found in the host cytoplasm. It localises to the host extracellular space. The protein localises to the extracellular space. Its subcellular location is the apoplast. In terms of biological role, mimics host plant CLE extracellular signal peptides that regulate cell fate. May play a role in the differentiation or division of feeding cells (syncytia) induced in plant roots during infection. The protein is CLAVATA3/ESR (CLE)-related protein 4A-3 (CLE-4A-3) of Globodera rostochiensis (Golden nematode worm).